Reading from the N-terminus, the 201-residue chain is Alpha-1-acid glycoprotein (201 aa).

A signal peptide spans 1 to 18 (MALPWALAVLSLLPLLHA). N25, N33, N87, N93, N103, and N169 each carry an N-linked (GlcNAc...) asparagine glycan. Cysteines 90 and 183 form a disulfide.

It belongs to the calycin superfamily. Lipocalin family.

It localises to the secreted. Functionally, functions as a transport protein in the blood stream. Binds various ligands in the interior of its beta-barrel domain. Appears to function in modulating the activity of the immune system during the acute-phase reaction. This chain is Alpha-1-acid glycoprotein (ORM1), found in Oryctolagus cuniculus (Rabbit).